Reading from the N-terminus, the 124-residue chain is Fluoride-specific ion channel FluC (124 aa).

Helical transmembrane passes span 4-24, 35-55, 67-87, and 100-120; these read FVLVATGGIFGSLARYVLSGV, YGTVLVNLLGSLLFGLVWGIL, LLLLTGFMGSLTTFSTLTYEG, and ALYIVGQTVAGIMLVWFGAGL. Residues glycine 75 and threonine 78 each coordinate Na(+).

This sequence belongs to the fluoride channel Fluc/FEX (TC 1.A.43) family.

The protein localises to the cell inner membrane. The enzyme catalyses fluoride(in) = fluoride(out). Its activity is regulated as follows. Na(+) is not transported, but it plays an essential structural role and its presence is essential for fluoride channel function. Fluoride-specific ion channel. Important for reducing fluoride concentration in the cell, thus reducing its toxicity. In Nitratidesulfovibrio vulgaris (strain ATCC 29579 / DSM 644 / CCUG 34227 / NCIMB 8303 / VKM B-1760 / Hildenborough) (Desulfovibrio vulgaris), this protein is Fluoride-specific ion channel FluC.